Here is a 418-residue protein sequence, read N- to C-terminus: Glutamyl-tRNA reductase (418 aa).

Residues 49-52, Ser109, 114-116, and Gln120 each bind substrate; these read TCNR and EPQ. Cys50 (nucleophile) is an active-site residue. 189–194 lines the NADP(+) pocket; it reads GAGETI.

It belongs to the glutamyl-tRNA reductase family. Homodimer.

It catalyses the reaction (S)-4-amino-5-oxopentanoate + tRNA(Glu) + NADP(+) = L-glutamyl-tRNA(Glu) + NADPH + H(+). It functions in the pathway porphyrin-containing compound metabolism; protoporphyrin-IX biosynthesis; 5-aminolevulinate from L-glutamyl-tRNA(Glu): step 1/2. Its function is as follows. Catalyzes the NADPH-dependent reduction of glutamyl-tRNA(Glu) to glutamate 1-semialdehyde (GSA). In Klebsiella pneumoniae subsp. pneumoniae (strain ATCC 700721 / MGH 78578), this protein is Glutamyl-tRNA reductase.